We begin with the raw amino-acid sequence, 468 residues long: Glutamate--tRNA ligase (468 aa).

Positions 8–18 (PSPTGDPHVGT) match the 'HIGH' region motif. The short motif at 243 to 247 (KISKR) is the 'KMSKS' region element. Residue K246 coordinates ATP.

Belongs to the class-I aminoacyl-tRNA synthetase family. Glutamate--tRNA ligase type 1 subfamily. Monomer.

It is found in the cytoplasm. The enzyme catalyses tRNA(Glu) + L-glutamate + ATP = L-glutamyl-tRNA(Glu) + AMP + diphosphate. Catalyzes the attachment of glutamate to tRNA(Glu) in a two-step reaction: glutamate is first activated by ATP to form Glu-AMP and then transferred to the acceptor end of tRNA(Glu). In Thermus thermophilus (strain ATCC BAA-163 / DSM 7039 / HB27), this protein is Glutamate--tRNA ligase.